The sequence spans 357 residues: UDP-N-acetylglucosamine--N-acetylmuramyl-(pentapeptide) pyrophosphoryl-undecaprenol N-acetylglucosamine transferase (357 aa).

UDP-N-acetyl-alpha-D-glucosamine is bound by residues 14-16 (TGG), Asn-128, Arg-169, Ser-193, Ile-248, and Gln-292.

The protein belongs to the glycosyltransferase 28 family. MurG subfamily.

Its subcellular location is the cell inner membrane. It carries out the reaction di-trans,octa-cis-undecaprenyl diphospho-N-acetyl-alpha-D-muramoyl-L-alanyl-D-glutamyl-meso-2,6-diaminopimeloyl-D-alanyl-D-alanine + UDP-N-acetyl-alpha-D-glucosamine = di-trans,octa-cis-undecaprenyl diphospho-[N-acetyl-alpha-D-glucosaminyl-(1-&gt;4)]-N-acetyl-alpha-D-muramoyl-L-alanyl-D-glutamyl-meso-2,6-diaminopimeloyl-D-alanyl-D-alanine + UDP + H(+). Its pathway is cell wall biogenesis; peptidoglycan biosynthesis. In terms of biological role, cell wall formation. Catalyzes the transfer of a GlcNAc subunit on undecaprenyl-pyrophosphoryl-MurNAc-pentapeptide (lipid intermediate I) to form undecaprenyl-pyrophosphoryl-MurNAc-(pentapeptide)GlcNAc (lipid intermediate II). The sequence is that of UDP-N-acetylglucosamine--N-acetylmuramyl-(pentapeptide) pyrophosphoryl-undecaprenol N-acetylglucosamine transferase from Bdellovibrio bacteriovorus (strain ATCC 15356 / DSM 50701 / NCIMB 9529 / HD100).